A 404-amino-acid polypeptide reads, in one-letter code: Propionate kinase (404 aa).

The protein belongs to the acetokinase family. PduW subfamily.

The protein localises to the cytoplasm. The catalysed reaction is propanoate + ATP = propanoyl phosphate + ADP. It participates in polyol metabolism; 1,2-propanediol degradation. Functionally, works with phosphate acetyltransferase (pta) to capture exogenous propionate and regenerate propionyl-CoA during degradation of 1,2-propanediol (1,2-PD). This Escherichia fergusonii (strain ATCC 35469 / DSM 13698 / CCUG 18766 / IAM 14443 / JCM 21226 / LMG 7866 / NBRC 102419 / NCTC 12128 / CDC 0568-73) protein is Propionate kinase.